A 245-amino-acid polypeptide reads, in one-letter code: MIKLVLIRHGQSLWNLENRFTGWTDVDLSENGLHEARTAGAILKKNGYTFDVAYTSVLKRAIRTLWIILHEMDLAWVPVHKSWKLNERHYGALQGLNKDETAKKYGEEQVHIWRRSTNVRPPALAEDDPRYEVTDPRYKRLKKGEFPLTECLEDTEKRVLEFWHKEIAPMLCSNQKVIISSHGNTIRSLVKYLDHLSDDGVVSLNIPTGIPLVYELDEHLHPIRHYYLNMDGEVQEGVIPKHISF.

Substrate is bound by residues 8-15, 21-22, arginine 60, 87-90, lysine 98, 114-115, and 183-184; these read RHGQSLWN, TG, ERHY, RR, and GN. The active-site Tele-phosphohistidine intermediate is histidine 9. The active-site Proton donor/acceptor is glutamate 87.

The protein belongs to the phosphoglycerate mutase family. BPG-dependent PGAM subfamily.

The enzyme catalyses (2R)-2-phosphoglycerate = (2R)-3-phosphoglycerate. Its pathway is carbohydrate degradation; glycolysis; pyruvate from D-glyceraldehyde 3-phosphate: step 3/5. In terms of biological role, catalyzes the interconversion of 2-phosphoglycerate and 3-phosphoglycerate. The sequence is that of 2,3-bisphosphoglycerate-dependent phosphoglycerate mutase from Bacillus cytotoxicus (strain DSM 22905 / CIP 110041 / 391-98 / NVH 391-98).